The chain runs to 547 residues: Chaperonin GroEL (547 aa).

ATP contacts are provided by residues 30-33, lysine 51, 87-91, glycine 415, 479-481, and aspartate 495; these read TLGP, DGTTT, and NAA.

It belongs to the chaperonin (HSP60) family. Forms a cylinder of 14 subunits composed of two heptameric rings stacked back-to-back. Interacts with the co-chaperonin GroES.

The protein localises to the cytoplasm. The enzyme catalyses ATP + H2O + a folded polypeptide = ADP + phosphate + an unfolded polypeptide.. In terms of biological role, together with its co-chaperonin GroES, plays an essential role in assisting protein folding. The GroEL-GroES system forms a nano-cage that allows encapsulation of the non-native substrate proteins and provides a physical environment optimized to promote and accelerate protein folding. The protein is Chaperonin GroEL of Pseudomonas syringae pv. tomato (strain ATCC BAA-871 / DC3000).